The primary structure comprises 325 residues: Putative gluconeogenesis factor (325 aa).

It belongs to the gluconeogenesis factor family.

It localises to the cytoplasm. Required for morphogenesis under gluconeogenic growth conditions. The protein is Putative gluconeogenesis factor of Streptococcus pneumoniae serotype 4 (strain ATCC BAA-334 / TIGR4).